Reading from the N-terminus, the 391-residue chain is 3-ketoacyl-CoA thiolase, peroxisomal (391 aa).

The active-site Acyl-thioester intermediate is the C92. Catalysis depends on proton acceptor residues H335 and C366.

This sequence belongs to the thiolase-like superfamily. Thiolase family. In terms of assembly, homodimer.

The protein localises to the peroxisome. It carries out the reaction an acyl-CoA + acetyl-CoA = a 3-oxoacyl-CoA + CoA. It functions in the pathway lipid metabolism; fatty acid metabolism. The sequence is that of 3-ketoacyl-CoA thiolase, peroxisomal (FOX3) from Encephalitozoon cuniculi (strain GB-M1) (Microsporidian parasite).